Here is a 118-residue protein sequence, read N- to C-terminus: UPF0058 protein MJ1132 (118 aa).

The protein belongs to the UPF0058 family.

This Methanocaldococcus jannaschii (strain ATCC 43067 / DSM 2661 / JAL-1 / JCM 10045 / NBRC 100440) (Methanococcus jannaschii) protein is UPF0058 protein MJ1132.